Here is a 159-residue protein sequence, read N- to C-terminus: Phosphopantetheine adenylyltransferase (159 aa).

Thr-10 provides a ligand contact to substrate. Residues 10–11 and His-18 each bind ATP; that span reads TF. The substrate site is built by Lys-42, Leu-74, and Arg-88. Residues 89–91, Glu-99, and 124–130 contribute to the ATP site; these read GLR and FAYVSSS.

Belongs to the bacterial CoaD family. As to quaternary structure, homohexamer. The cofactor is Mg(2+).

It is found in the cytoplasm. It carries out the reaction (R)-4'-phosphopantetheine + ATP + H(+) = 3'-dephospho-CoA + diphosphate. The protein operates within cofactor biosynthesis; coenzyme A biosynthesis; CoA from (R)-pantothenate: step 4/5. Its function is as follows. Reversibly transfers an adenylyl group from ATP to 4'-phosphopantetheine, yielding dephospho-CoA (dPCoA) and pyrophosphate. This chain is Phosphopantetheine adenylyltransferase, found in Thioalkalivibrio sulfidiphilus (strain HL-EbGR7).